Reading from the N-terminus, the 508-residue chain is Photosystem II CP47 reaction center protein (508 aa).

The next 6 membrane-spanning stretches (helical) occupy residues 21 to 36 (SVHIMHTALVSGWAGS), 101 to 115 (IVFSGLCFLAAIWHW), 140 to 156 (GIHLFLAGVACFGFGAF), 203 to 218 (IAAGTLGILAGLFHLS), 237 to 252 (VLSSSIAAVFFAAFVV), and 457 to 472 (TFALLFFFGHIWHGAR).

It belongs to the PsbB/PsbC family. PsbB subfamily. As to quaternary structure, PSII is composed of 1 copy each of membrane proteins PsbA, PsbB, PsbC, PsbD, PsbE, PsbF, PsbH, PsbI, PsbJ, PsbK, PsbL, PsbM, PsbT, PsbX, PsbY, PsbZ, Psb30/Ycf12, at least 3 peripheral proteins of the oxygen-evolving complex and a large number of cofactors. It forms dimeric complexes. Binds multiple chlorophylls. PSII binds additional chlorophylls, carotenoids and specific lipids. serves as cofactor.

The protein localises to the plastid. The protein resides in the chloroplast thylakoid membrane. In terms of biological role, one of the components of the core complex of photosystem II (PSII). It binds chlorophyll and helps catalyze the primary light-induced photochemical processes of PSII. PSII is a light-driven water:plastoquinone oxidoreductase, using light energy to abstract electrons from H(2)O, generating O(2) and a proton gradient subsequently used for ATP formation. The polypeptide is Photosystem II CP47 reaction center protein (Zea mays (Maize)).